A 504-amino-acid chain; its full sequence is Protein anon-37Cs (504 aa).

Low levels seen in adult heads, thorax, abdomen and ovaries, high levels in testes.

It is found in the cytoplasm. Functionally, has a non-vital function. This is Protein anon-37Cs (anon-37Cs) from Drosophila melanogaster (Fruit fly).